A 508-amino-acid polypeptide reads, in one-letter code: Probable malate:quinone oxidoreductase (508 aa).

Belongs to the MQO family. FAD is required as a cofactor.

The enzyme catalyses (S)-malate + a quinone = a quinol + oxaloacetate. The protein operates within carbohydrate metabolism; tricarboxylic acid cycle; oxaloacetate from (S)-malate (quinone route): step 1/1. The sequence is that of Probable malate:quinone oxidoreductase from Chromohalobacter salexigens (strain ATCC BAA-138 / DSM 3043 / CIP 106854 / NCIMB 13768 / 1H11).